Here is a 225-residue protein sequence, read N- to C-terminus: Uridylate kinase (225 aa).

An ATP-binding site is contributed by 9–10 (GS). Gly-46 is a binding site for UMP. ATP is bound by residues Gly-47 and Arg-51. UMP contacts are provided by residues Asp-67 and 115–121 (THPAHTT). Thr-141, Asn-142, Tyr-147, and Asp-150 together coordinate ATP.

It belongs to the UMP kinase family. In terms of assembly, homohexamer.

It is found in the cytoplasm. It catalyses the reaction UMP + ATP = UDP + ADP. It participates in pyrimidine metabolism; CTP biosynthesis via de novo pathway; UDP from UMP (UMPK route): step 1/1. Its activity is regulated as follows. Inhibited by UTP. Catalyzes the reversible phosphorylation of UMP to UDP. In Methanococcus vannielii (strain ATCC 35089 / DSM 1224 / JCM 13029 / OCM 148 / SB), this protein is Uridylate kinase.